Reading from the N-terminus, the 954-residue chain is DNA repair and telomere maintenance protein NBS1 (954 aa).

One can recognise an FHA domain in the interval 22–85; that stretch reads YLFGRTVAEA…KGTLVNGVQI (64 aa). BRCT domains lie at 107–186 and 244–349; these read TLKI…NAIV and GYTF…LEAI. Polar residues predominate over residues 368-377; that stretch reads VSVSASVEPQ. Disordered stretches follow at residues 368–431, 444–506, 528–580, 630–654, and 692–954; these read VSVS…FKGF, QAQS…PLPE, IEAG…KQED, VRQP…WDPR, and GIGD…GRRR. Basic and acidic residues predominate over residues 378–393; sequence SSEKVRPAVEDRKEVE. Residues 416 to 428 show a composition bias toward basic residues; sequence PHRRERRTGRSRF. The segment covering 458 to 471 has biased composition (polar residues); sequence PSASQDSLFVSQRE. Over residues 541-554 the composition is skewed to acidic residues; that stretch reads PEPEREDEDVEMVE. 2 stretches are compositionally biased toward basic and acidic residues: residues 640 to 654 and 704 to 715; these read RTRE…WDPR and GRVPRRPKETQT. Low complexity predominate over residues 726–737; the sequence is DGSGFAAAAASG. Over residues 738 to 751 the composition is skewed to basic and acidic residues; it reads KGKEKDKENEKEVG. Low complexity-rich tracts occupy residues 801 to 815 and 826 to 842; these read EVVS…ASEP and RANA…SQTQ. Over residues 936–945 the composition is skewed to acidic residues; sequence GSEEESEDDE.

Belongs to the Nibrin family. In terms of assembly, component of the MRN complex composed of two heterodimers RAD50 and MRE11 associated with a single NBS1.

It localises to the nucleus. The protein resides in the chromosome. Component of the MRN complex, which plays a central role in double-strand break (DSB) repair, DNA recombination, maintenance of telomere integrity and meiosis. The MRN complex is involved in the repair of DNA double-strand breaks (DSBs) via homologous recombination (HR), an error-free mechanism which primarily occurs during S and G2 phases. The complex (1) mediates the end resection of damaged DNA, which generates proper single-stranded DNA, a key initial steps in HR, and is (2) required for the recruitment of other repair factors and efficient activation of ATM and ATR upon DNA damage. The MRN complex possesses single-strand endonuclease activity and double-strand-specific 3'-5' exonuclease activity, which are provided by MRE11, to initiate end resection, which is required for single-strand invasion and recombination. Within the MRN complex, NBS1 acts as a protein-protein adapter, which specifically recognizes and binds phosphorylated proteins, promoting their recruitment to DNA damage sites. Recruits MRE11 and RAD50 components of the MRN complex to DSBs in response to DNA damage. This is DNA repair and telomere maintenance protein NBS1 from Chaetomium thermophilum (strain DSM 1495 / CBS 144.50 / IMI 039719) (Thermochaetoides thermophila).